A 295-amino-acid polypeptide reads, in one-letter code: Protease HtpX (295 aa).

Transmembrane regions (helical) follow at residues 4-24 and 42-62; these read IFLF…VLRL and ALLI…LAIS. Position 147 (H147) interacts with Zn(2+). The active site involves E148. Position 151 (H151) interacts with Zn(2+). 2 consecutive transmembrane segments (helical) span residues 155 to 175 and 197 to 217; these read GDMV…IFLA and FWIT…IIVM. Residue E224 coordinates Zn(2+).

The protein belongs to the peptidase M48B family. It depends on Zn(2+) as a cofactor.

The protein resides in the cell inner membrane. The chain is Protease HtpX from Thioalkalivibrio sulfidiphilus (strain HL-EbGR7).